Here is an 846-residue protein sequence, read N- to C-terminus: Exonuclease 1 (846 aa).

The tract at residues 1 to 99 (MGIQGLLQFI…RSRRERRQAN (99 aa)) is N-domain. Mg(2+)-binding residues include D30, D78, E150, D152, D171, D173, D225, and D270. An interaction with MSH3 region spans residues 129 to 387 (MAHKVIKAAR…RPESGTVSDA (259 aa)). Positions 138 to 229 (RSQGVDCLVA…ILSGCDYLSS (92 aa)) are I-domain. The disordered stretch occupies residues 372 to 396 (HRNYSPRPESGTVSDAPQLKENPST). S376 is modified (phosphoserine). Over residues 382–396 (GTVSDAPQLKENPST) the composition is skewed to polar residues. Residues 388–490 (PQLKENPSTV…NKFATFLQRK (103 aa)) are interaction with MLH1. The Nuclear localization signal motif lies at 418–421 (KRPR). S422 and S454 each carry phosphoserine. Residue K482 is modified to N6-acetyllysine. Position 581 is a phosphothreonine (T581). A phosphoserine mark is found at S598 and S610. Positions 600-846 (PTLGTLRSCF…CGRVQRAIFQ (247 aa)) are interaction with MSH2. Residues 618-781 (FSRTPSPSPS…SIQKRKHHNA (164 aa)) are disordered. Composition is skewed to polar residues over residues 620–631 (RTPSPSPSTALQ) and 639–654 (SPTSLPENNMSDVSQL). T621 carries the post-translational modification Phosphothreonine. S623, S639, S660, and S674 each carry phosphoserine. The segment covering 655 to 671 (KSEESSDDESHPLREEA) has biased composition (basic and acidic residues). 3 stretches are compositionally biased toward polar residues: residues 672–689 (CSSQSQESGEFSLQSSNA), 713–722 (DSQSDQTSKL), and 743–754 (KSSSADSLSTTK). A Phosphoserine; by ATR modification is found at S714. S746 bears the Phosphoserine mark. The interval 787-846 (LQIKLNELWKNFGFKKDSEKLPPCKKPLSPVRDNIQLTPEAEEDIFNKPECGRVQRAIFQ) is interaction with MLH1.

Belongs to the XPG/RAD2 endonuclease family. EXO1 subfamily. As to quaternary structure, interacts with the MLH1-PMS2 heterodimer via MLH1. Interacts with MSH3. Interacts with the MSH2-MSH6 heterodimer via MSH2, and this interaction may increase the processivity of the 5'-&gt;3' exonuclease activity. Interacts with PCNA, and this interaction may both stimulate the cryptic 3'-&gt;5' exonuclease activity and suppress the 5'-&gt;3' exonuclease activity. Interacts with WRN, and this interaction stimulates both the 5'-&gt;3' exonuclease activity and cleavage of 5'-overhanging flap structures. Interacts with RECQL/RECQ1, and this interaction stimulates cleavage of 5'-overhanging flap structures. Interacts with DNA helicase ZGRF1; the interaction is increased following DNA damage induction. The cofactor is Mg(2+). In terms of processing, phosphorylated upon DNA damage and in response to agents stalling DNA replication, probably by ATM or ATR. Phosphorylation at Ser-454, Thr-621 and Ser-714 is induced upon DNA-damage caused by treatment with hydroxyurea (HU) but not upon IR treatment. The HU-induced EXO1 triple phosphorylation facilitates destabilization/degradation of the protein. Highly expressed in bone marrow, testis and thymus. Expressed at lower levels in colon, lymph nodes, ovary, placenta, prostate, small intestine, spleen and stomach.

It is found in the nucleus. In terms of biological role, 5'-&gt;3' double-stranded DNA exonuclease which may also possess a cryptic 3'-&gt;5' double-stranded DNA exonuclease activity. Functions in DNA mismatch repair (MMR) to excise mismatch-containing DNA tracts directed by strand breaks located either 5' or 3' to the mismatch. Also exhibits endonuclease activity against 5'-overhanging flap structures similar to those generated by displacement synthesis when DNA polymerase encounters the 5'-end of a downstream Okazaki fragment. Required for somatic hypermutation (SHM) and class switch recombination (CSR) of immunoglobulin genes. Essential for male and female meiosis. This chain is Exonuclease 1 (EXO1), found in Homo sapiens (Human).